Reading from the N-terminus, the 512-residue chain is Histidine ammonia-lyase (512 aa).

A cross-link (5-imidazolinone (Ala-Gly)) is located at residues 142–144; it reads ASG. At Ser-143 the chain carries 2,3-didehydroalanine (Ser).

Belongs to the PAL/histidase family. In terms of processing, contains an active site 4-methylidene-imidazol-5-one (MIO), which is formed autocatalytically by cyclization and dehydration of residues Ala-Ser-Gly.

The protein localises to the cytoplasm. It catalyses the reaction L-histidine = trans-urocanate + NH4(+). It functions in the pathway amino-acid degradation; L-histidine degradation into L-glutamate; N-formimidoyl-L-glutamate from L-histidine: step 1/3. The protein is Histidine ammonia-lyase of Bartonella tribocorum (strain CIP 105476 / IBS 506).